A 104-amino-acid polypeptide reads, in one-letter code: Ribonucleotide reductase inhibitor protein SML1 (104 aa).

Methionine 1 bears the N-acetylmethionine mark. The segment at 43 to 62 is disordered; sequence PMLSTQNSMGSSASASASSL. 3 positions are modified to phosphoserine; by DUN1: serine 56, serine 58, and serine 60.

In terms of assembly, homodimer; disulfide-linked. Interacts with RNR1. Phosphorylated by DUN1, a downstream effector of the Mec1/Rad53 checkpoint pathway, in response to DNA damage. This promotes ubiquitination of SML1 and targets it for degradation by the 26S proteasome.

Its subcellular location is the nucleus. It is found in the cytoplasm. Its function is as follows. Strong inhibitor of ribonucleotide reductase (RNR1) and is involved in regulating dNTP production. The chain is Ribonucleotide reductase inhibitor protein SML1 (SML1) from Saccharomyces cerevisiae (strain ATCC 204508 / S288c) (Baker's yeast).